Consider the following 211-residue polypeptide: ATP phosphoribosyltransferase (211 aa).

The protein belongs to the ATP phosphoribosyltransferase family. Short subfamily. In terms of assembly, heteromultimer composed of HisG and HisZ subunits.

It localises to the cytoplasm. It carries out the reaction 1-(5-phospho-beta-D-ribosyl)-ATP + diphosphate = 5-phospho-alpha-D-ribose 1-diphosphate + ATP. It functions in the pathway amino-acid biosynthesis; L-histidine biosynthesis; L-histidine from 5-phospho-alpha-D-ribose 1-diphosphate: step 1/9. Catalyzes the condensation of ATP and 5-phosphoribose 1-diphosphate to form N'-(5'-phosphoribosyl)-ATP (PR-ATP). Has a crucial role in the pathway because the rate of histidine biosynthesis seems to be controlled primarily by regulation of HisG enzymatic activity. The sequence is that of ATP phosphoribosyltransferase from Bacillus thuringiensis subsp. konkukian (strain 97-27).